Consider the following 354-residue polypeptide: uncharacterized protein (354 aa).

Residues 48 to 285 enclose the ABC transporter domain; that stretch reads VETWEISKIY…DEGYEVVLKG (238 aa). Residue 87–94 coordinates ATP; sequence GPNGAGKT.

Belongs to the ABC transporter superfamily.

This is an uncharacterized protein from Synechocystis sp. (strain ATCC 27184 / PCC 6803 / Kazusa).